Reading from the N-terminus, the 523-residue chain is ATP-dependent RNA helicase DBP3 (523 aa).

Positions 1–21 (MTKEEIADKKRKVVDEEVIEK) are enriched in basic and acidic residues. The disordered stretch occupies residues 1–71 (MTKEEIADKK…SEKKPEPTSA (71 aa)). Over residues 22–48 (KKSKKHKKDKKDKKEKKDKKHKKHKKE) the composition is skewed to basic residues. Residues 49-67 (KKGEKEVEVPEKESEKKPE) show a composition bias toward basic and acidic residues. Residues 114-140 (LSFDYLSLDSSIQAEISKFPKPTPIQA) carry the Q motif motif. One can recognise a Helicase ATP-binding domain in the interval 143-315 (WPYLLSGKDV…STFMNNPIKV (173 aa)). Position 156–163 (156–163 (AETGSGKT)) interacts with ATP. A DEAD box motif is present at residues 262–265 (DEAD). In terms of domain architecture, Helicase C-terminal spans 344 to 493 (KLLELLKKYH…PVPEDLIKFG (150 aa)).

The protein belongs to the DEAD box helicase family. DDX5/DBP2 subfamily.

It localises to the nucleus. The protein resides in the nucleolus. The catalysed reaction is ATP + H2O = ADP + phosphate + H(+). Its function is as follows. ATP-dependent RNA helicase required for 60S ribosomal subunit synthesis. Involved in efficient pre-rRNA processing, predominantly at site A3, which is necessary for the normal formation of 25S and 5.8S rRNAs. The sequence is that of ATP-dependent RNA helicase DBP3 (DBP3) from Saccharomyces cerevisiae (strain ATCC 204508 / S288c) (Baker's yeast).